Reading from the N-terminus, the 151-residue chain is MASLNCRTAVCVVCLEKPKYRCPTCRVPYCSVPCFQKHKEQCSSEARPVEKRRAGPPVRSEESKDDDSSVADFLNSDEEEDRVSLQNLKNLGESETLRSLLLNPHLRQLMISLDQGDNKAKLMRACMQEPLFVEFADCCLGIVEPSQKRDS.

The Zn(2+) site is built by Cys11, Cys14, Cys22, Cys25, Cys30, Cys34, His38, and Cys42. Residues 11–42 (CVVCLEKPKYRCPTCRVPYCSVPCFQKHKEQC) form an HIT-type zinc finger. The segment covering 43 to 53 (SSEARPVEKRR) has biased composition (basic and acidic residues). The segment at 43 to 81 (SSEARPVEKRRAGPPVRSEESKDDDSSVADFLNSDEEED) is disordered. Positions 63–81 (SKDDDSSVADFLNSDEEED) are enriched in acidic residues. Ser76 is modified (phosphoserine).

As to quaternary structure, thyroid receptor interacting proteins (TRIPs) specifically interact with the ligand binding domain of the thyroid receptor (TR). Requires the presence of thyroid hormone for its interaction. Interacts with NUFIP1. Interacts (via HIT-type zinc finger) with the RUVBL1/RUVBL2 complex in the presence of ADP. Expressed in the cerebellum.

The protein resides in the cytoplasm. It localises to the nucleus. The polypeptide is Zinc finger HIT domain-containing protein 3 (Znhit3) (Mus musculus (Mouse)).